A 208-amino-acid polypeptide reads, in one-letter code: ATP synthase subunit b 1 (208 aa).

Polar residues predominate over residues M1 to S18. The disordered stretch occupies residues M1 to A26. The chain crosses the membrane as a helical span at residues S56–P78.

It belongs to the ATPase B chain family. In terms of assembly, F-type ATPases have 2 components, F(1) - the catalytic core - and F(0) - the membrane proton channel. F(1) has five subunits: alpha(3), beta(3), gamma(1), delta(1), epsilon(1). F(0) has three main subunits: a(1), b(2) and c(10-14). The alpha and beta chains form an alternating ring which encloses part of the gamma chain. F(1) is attached to F(0) by a central stalk formed by the gamma and epsilon chains, while a peripheral stalk is formed by the delta and b chains.

The protein localises to the cell inner membrane. Functionally, f(1)F(0) ATP synthase produces ATP from ADP in the presence of a proton or sodium gradient. F-type ATPases consist of two structural domains, F(1) containing the extramembraneous catalytic core and F(0) containing the membrane proton channel, linked together by a central stalk and a peripheral stalk. During catalysis, ATP synthesis in the catalytic domain of F(1) is coupled via a rotary mechanism of the central stalk subunits to proton translocation. Component of the F(0) channel, it forms part of the peripheral stalk, linking F(1) to F(0). This is ATP synthase subunit b 1 from Brucella abortus (strain 2308).